A 188-amino-acid polypeptide reads, in one-letter code: Putative glutamine amidotransferase-like protein YvdE homolog (188 aa).

The Glutamine amidotransferase type-1 domain maps to 17–188 (SPFWWNKVSY…IKDLGQGLQA (172 aa)).

This is Putative glutamine amidotransferase-like protein YvdE homolog from Lactococcus lactis subsp. cremoris (Streptococcus cremoris).